Reading from the N-terminus, the 250-residue chain is 1-(5-phosphoribosyl)-5-[(5-phosphoribosylamino)methylideneamino] imidazole-4-carboxamide isomerase (250 aa).

Aspartate 10 acts as the Proton acceptor in catalysis. Aspartate 131 (proton donor) is an active-site residue.

This sequence belongs to the HisA/HisF family.

The protein resides in the cytoplasm. It carries out the reaction 1-(5-phospho-beta-D-ribosyl)-5-[(5-phospho-beta-D-ribosylamino)methylideneamino]imidazole-4-carboxamide = 5-[(5-phospho-1-deoxy-D-ribulos-1-ylimino)methylamino]-1-(5-phospho-beta-D-ribosyl)imidazole-4-carboxamide. Its pathway is amino-acid biosynthesis; L-histidine biosynthesis; L-histidine from 5-phospho-alpha-D-ribose 1-diphosphate: step 4/9. This chain is 1-(5-phosphoribosyl)-5-[(5-phosphoribosylamino)methylideneamino] imidazole-4-carboxamide isomerase, found in Desulfitobacterium hafniense (strain DSM 10664 / DCB-2).